The following is a 322-amino-acid chain: D-alanine--D-alanine ligase (322 aa).

Residues 110–310 enclose the ATP-grasp domain; that stretch reads KAVLAAAGIP…FDRLVFWIVE (201 aa). Position 137–191 (137–191) interacts with ATP; the sequence is MPPPYVVKPNAEGSSVGVSLVFEGANGPPRQLAAPDWAFGEQVMVEPYIPGLELA. Mg(2+) is bound by residues D263, E277, and N279.

Belongs to the D-alanine--D-alanine ligase family. Mg(2+) serves as cofactor. It depends on Mn(2+) as a cofactor.

Its subcellular location is the cytoplasm. The catalysed reaction is 2 D-alanine + ATP = D-alanyl-D-alanine + ADP + phosphate + H(+). The protein operates within cell wall biogenesis; peptidoglycan biosynthesis. Its function is as follows. Cell wall formation. The sequence is that of D-alanine--D-alanine ligase from Caulobacter sp. (strain K31).